Reading from the N-terminus, the 192-residue chain is uncharacterized protein (192 aa).

The stretch at 53–111 (CLKESVERARKVYLSLLKDYERKSREYEKAYENYLKELRTYRETLYRIKEDLKFYERIC) forms a coiled coil.

This is an uncharacterized protein from Aquifex aeolicus (strain VF5).